The sequence spans 200 residues: Peptidyl-tRNA hydrolase (200 aa).

A tRNA-binding site is contributed by Tyr23. His28 (proton acceptor) is an active-site residue. 3 residues coordinate tRNA: Phe79, Asn81, and Asn127.

This sequence belongs to the PTH family. As to quaternary structure, monomer.

The protein resides in the cytoplasm. It catalyses the reaction an N-acyl-L-alpha-aminoacyl-tRNA + H2O = an N-acyl-L-amino acid + a tRNA + H(+). Its function is as follows. Hydrolyzes ribosome-free peptidyl-tRNAs (with 1 or more amino acids incorporated), which drop off the ribosome during protein synthesis, or as a result of ribosome stalling. Functionally, catalyzes the release of premature peptidyl moieties from peptidyl-tRNA molecules trapped in stalled 50S ribosomal subunits, and thus maintains levels of free tRNAs and 50S ribosomes. The sequence is that of Peptidyl-tRNA hydrolase from Streptomyces coelicolor (strain ATCC BAA-471 / A3(2) / M145).